The primary structure comprises 1505 residues: Phosphatidylinositol 3-kinase C2 domain-containing subunit gamma (1505 aa).

The interval 1 to 32 is disordered; that stretch reads MAYNWQTEPNRAEPQEGGHDHQQCHHADQHLS. The segment covering 10–31 has biased composition (basic and acidic residues); sequence NRAEPQEGGHDHQQCHHADQHL. Positions 278-370 constitute a PI3K-RBD domain; sequence PSRLFADTQF…IQLHLQRSRD (93 aa). The C2 PI3K-type domain occupies 540-688; the sequence is LHSHLSFTVC…TPLTLQIDFP (149 aa). Positions 703–879 constitute a PIK helical domain; sequence RTDHQEPPRE…QELLAALQFC (177 aa). Residues 948–1226 enclose the PI3K/PI4K catalytic domain; sequence DRDACSYFTS…KIKQSLECFP (279 aa). The interval 954-960 is G-loop; that stretch reads YFTSNAL. The interval 1090–1098 is catalytic loop; that stretch reads GVCDRHNDN. Residues 1109-1135 are activation loop; that stretch reads HIDFGKFLGHAQTFGGIKRDRAPFIFT. One can recognise a PX domain in the interval 1259 to 1371; sequence LNKTRTIQRV…SFFLSEHIQQ (113 aa). The region spanning 1384-1505 is the C2 domain; sequence HSPDKSPQVQ…KWYPLGNSII (122 aa).

It belongs to the PI3/PI4-kinase family. In terms of tissue distribution, predominantly expressed in normal liver. High levels also found in regenerating liver. Very low levels found in heart and testis.

It localises to the membrane. It carries out the reaction a 1,2-diacyl-sn-glycero-3-phospho-(1D-myo-inositol) + ATP = a 1,2-diacyl-sn-glycero-3-phospho-(1D-myo-inositol-3-phosphate) + ADP + H(+). It catalyses the reaction a 1,2-diacyl-sn-glycero-3-phospho-(1D-myo-inositol 4-phosphate) + ATP = a 1,2-diacyl-sn-glycero-3-phospho-(1D-myo-inositol-3,4-bisphosphate) + ADP + H(+). Functionally, generates phosphatidylinositol 3-phosphate (PtdIns3P) and phosphatidylinositol 3,4-bisphosphate (PtdIns(3,4)P2) that act as second messengers. May play a role in SDF1A-stimulated chemotaxis. This Rattus norvegicus (Rat) protein is Phosphatidylinositol 3-kinase C2 domain-containing subunit gamma (Pik3c2g).